We begin with the raw amino-acid sequence, 395 residues long: Dihydroorotate dehydrogenase (quinone), mitochondrial (395 aa).

The N-terminal 10 residues, 1–10 (MAWRQLRKRA), are a transit peptide targeting the mitochondrion; not cleaved. At 1–10 (MAWRQLRKRA) the chain is on the mitochondrial matrix side. Residues 11–30 (LDAAIILGGGGLLFTSYLTA) form a helical membrane-spanning segment. Over 31 to 395 (TGDDHFYAEY…TDAIGVDHRR (365 aa)) the chain is Mitochondrial intermembrane. Residues 95–99 (AGFDK) and Ser119 contribute to the FMN site. Lys99 is a binding site for substrate. A substrate-binding site is contributed by 144–148 (NRYGF). FMN contacts are provided by Asn180 and Asn211. Residue 211–216 (NVSSPN) coordinates substrate. The active-site Nucleophile is Ser214. FMN-binding residues include Lys254 and Thr282. 283-284 (NT) contributes to the substrate binding site. Residues Gly305, Gly334, and 355 to 356 (YT) contribute to the FMN site.

The protein belongs to the dihydroorotate dehydrogenase family. Type 2 subfamily. As to quaternary structure, monomer. It depends on FMN as a cofactor. In terms of processing, the uncleaved transit peptide is required for mitochondrial targeting and proper membrane integration.

The protein localises to the mitochondrion inner membrane. The enzyme catalyses (S)-dihydroorotate + a quinone = orotate + a quinol. The protein operates within pyrimidine metabolism; UMP biosynthesis via de novo pathway; orotate from (S)-dihydroorotate (quinone route): step 1/1. Catalyzes the conversion of dihydroorotate to orotate with quinone as electron acceptor. Required for UMP biosynthesis via de novo pathway. The polypeptide is Dihydroorotate dehydrogenase (quinone), mitochondrial (Dhodh) (Mus musculus (Mouse)).